The chain runs to 107 residues: U1-lycotoxin-Ls1i (107 aa).

Positions Met-1–Ser-20 are cleaved as a signal peptide. The propeptide occupies Glu-21 to Arg-41. 4 disulfides stabilise this stretch: Cys-44–Cys-59, Cys-51–Cys-68, Cys-58–Cys-86, and Cys-70–Cys-84.

This sequence belongs to the neurotoxin 19 (CSTX) family. 04 (U1-Lctx) subfamily. In terms of tissue distribution, expressed by the venom gland.

It localises to the secreted. This is U1-lycotoxin-Ls1i from Lycosa singoriensis (Wolf spider).